The following is a 943-amino-acid chain: Leucine--tRNA ligase (943 aa).

The 'HIGH' region signature appears at 40 to 51 (PYPSGAGLHVGH). Positions 717-721 (KMSKS) match the 'KMSKS' region motif. Lys720 contacts ATP.

Belongs to the class-I aminoacyl-tRNA synthetase family.

Its subcellular location is the cytoplasm. It catalyses the reaction tRNA(Leu) + L-leucine + ATP = L-leucyl-tRNA(Leu) + AMP + diphosphate. The chain is Leucine--tRNA ligase from Bacteroides fragilis (strain YCH46).